The chain runs to 283 residues: Energy-coupling factor transporter ATP-binding protein EcfA1 (283 aa).

In terms of domain architecture, ABC transporter spans 7-244 (VEFRHVSFTY…PELLQEIGLD (238 aa)). 41 to 48 (GHNGSGKS) is a binding site for ATP.

The protein belongs to the ABC transporter superfamily. Energy-coupling factor EcfA family. In terms of assembly, forms a stable energy-coupling factor (ECF) transporter complex composed of 2 membrane-embedded substrate-binding proteins (S component), 2 ATP-binding proteins (A component) and 2 transmembrane proteins (T component).

It is found in the cell membrane. In terms of biological role, ATP-binding (A) component of a common energy-coupling factor (ECF) ABC-transporter complex. Unlike classic ABC transporters this ECF transporter provides the energy necessary to transport a number of different substrates. The chain is Energy-coupling factor transporter ATP-binding protein EcfA1 from Lactobacillus acidophilus (strain ATCC 700396 / NCK56 / N2 / NCFM).